A 202-amino-acid chain; its full sequence is Small ribosomal subunit protein uS4c (202 aa).

The S4 RNA-binding domain maps to 90 to 153 (MRLDNIIFRL…KSEAIISKNI (64 aa)).

This sequence belongs to the universal ribosomal protein uS4 family. As to quaternary structure, part of the 30S ribosomal subunit. Contacts protein S5. The interaction surface between S4 and S5 is involved in control of translational fidelity.

It localises to the plastid. The protein localises to the chloroplast. Functionally, one of the primary rRNA binding proteins, it binds directly to 16S rRNA where it nucleates assembly of the body of the 30S subunit. In terms of biological role, with S5 and S12 plays an important role in translational accuracy. This chain is Small ribosomal subunit protein uS4c (rps4), found in Leucodon sciuroides (Moss).